Consider the following 185-residue polypeptide: Ribosome maturation factor RimM (185 aa).

The PRC barrel domain occupies 106 to 185 (EGDYYWKDLM…SIEVDWDPGF (80 aa)).

This sequence belongs to the RimM family. In terms of assembly, binds ribosomal protein uS19.

It localises to the cytoplasm. In terms of biological role, an accessory protein needed during the final step in the assembly of 30S ribosomal subunit, possibly for assembly of the head region. Essential for efficient processing of 16S rRNA. May be needed both before and after RbfA during the maturation of 16S rRNA. It has affinity for free ribosomal 30S subunits but not for 70S ribosomes. This is Ribosome maturation factor RimM from Shigella dysenteriae serotype 1 (strain Sd197).